The chain runs to 395 residues: Non-homologous end joining protein Ku (395 aa).

In terms of domain architecture, Ku spans 9–181 (ISFGLVSIPI…PPEDAAPDGD (173 aa)). The disordered stretch occupies residues 252 to 395 (RAARTSRDDE…SASSRKRTSA (144 aa)). Polar residues-rich tracts occupy residues 283–292 (SSKTSGQSSG) and 311–320 (GKTVTRSGDS). Positions 351-361 (TARKTTAKKTT) are enriched in basic residues. Over residues 362-371 (AKGTTGTTAA) the composition is skewed to low complexity.

Belongs to the prokaryotic Ku family. As to quaternary structure, homodimer. Interacts with LigD.

With LigD forms a non-homologous end joining (NHEJ) DNA repair enzyme, which repairs dsDNA breaks with reduced fidelity. Binds linear dsDNA with 5'- and 3'- overhangs but not closed circular dsDNA nor ssDNA. Recruits and stimulates the ligase activity of LigD. The sequence is that of Non-homologous end joining protein Ku from Streptomyces griseus subsp. griseus (strain JCM 4626 / CBS 651.72 / NBRC 13350 / KCC S-0626 / ISP 5235).